Here is a 908-residue protein sequence, read N- to C-terminus: Metabotropic glutamate receptor 8 (908 aa).

An N-terminal signal peptide occupies residues 1–33; sequence MVCEGKRSASCPCFFLLTAKFYWILTMMQRTHS. Topologically, residues 34 to 583 are extracellular; sequence QEYAHSIRVD…IIKLEWHSPW (550 aa). A disulfide bond links cysteine 64 and cysteine 106. Asparagine 95 carries an N-linked (GlcNAc...) asparagine glycan. Residues serine 156, 177-179, and tyrosine 227 each bind L-glutamate; that span reads AST. Disulfide bonds link cysteine 246–cysteine 534, cysteine 369–cysteine 384, cysteine 424–cysteine 431, cysteine 516–cysteine 535, cysteine 520–cysteine 538, cysteine 541–cysteine 553, and cysteine 556–cysteine 569. Asparagine 298 is a glycosylation site (N-linked (GlcNAc...) asparagine). Aspartate 309 provides a ligand contact to L-glutamate. Residue lysine 401 participates in L-glutamate binding. 2 N-linked (GlcNAc...) asparagine glycosylation sites follow: asparagine 452 and asparagine 480. The N-linked (GlcNAc...) asparagine glycan is linked to asparagine 565. A helical membrane pass occupies residues 584-608; that stretch reads AVVPVFVAILGIIATTFVIVTFVRY. The Cytoplasmic segment spans residues 609–620; it reads NDTPIVRASGRE. The helical transmembrane segment at 621 to 641 threads the bilayer; it reads LSYVLLTGIFLCYSITFLMIA. Topologically, residues 642–647 are extracellular; it reads APDTII. Residues 648–668 traverse the membrane as a helical segment; the sequence is CSFRRVFLGLGMCFSYAALLT. At 669–695 the chain is on the cytoplasmic side; that stretch reads KTNRIHRIFEQGKKSVTAPKFISPASQ. The chain crosses the membrane as a helical span at residues 696-716; that stretch reads LVITFSLISVQLLGVFVWFVV. Residues 717–746 lie on the Extracellular side of the membrane; the sequence is DPPHIIIDYGEQRTLDPEKARGVLKCDISD. Residues 747–768 form a helical membrane-spanning segment; the sequence is LSLICSLGYSILLMVTCTVYAI. At 769–781 the chain is on the cytoplasmic side; that stretch reads KTRGVPETFNEAK. Residues 782–803 form a helical membrane-spanning segment; that stretch reads PIGFTMYTTCIIWLAFIPIFFG. At 804–818 the chain is on the extracellular side; sequence TAQSAEKMYIQTTTL. The chain crosses the membrane as a helical span at residues 819–843; sequence TVSMSLSASVSLGMLYMPKVYIIIF. Residues 844–908 lie on the Cytoplasmic side of the membrane; it reads HPEQNVQKRK…TYISYSNHSI (65 aa). Lysine 882 is covalently cross-linked (Glycyl lysine isopeptide (Lys-Gly) (interchain with G-Cter in SUMO1)).

This sequence belongs to the G-protein coupled receptor 3 family. In terms of assembly, interacts with PICK1.

The protein resides in the cell membrane. In terms of biological role, G-protein coupled receptor for glutamate. Ligand binding causes a conformation change that triggers signaling via guanine nucleotide-binding proteins (G proteins) and modulates the activity of down-stream effectors, such as adenylate cyclase. Signaling inhibits adenylate cyclase activity. This Homo sapiens (Human) protein is Metabotropic glutamate receptor 8 (GRM8).